Reading from the N-terminus, the 103-residue chain is Histone H4 (103 aa).

Gly residues predominate over residues 1–14; the sequence is MSGRGKGGKGLGKG. The tract at residues 1-20 is disordered; that stretch reads MSGRGKGGKGLGKGGAKRHR. Position 2 is an N-acetylserine (S2). N6-acetyllysine is present on K17. Residues 17–21 mediate DNA binding; the sequence is KRHRK. K21 is modified (N6-methyllysine).

This sequence belongs to the histone H4 family. As to quaternary structure, the nucleosome is a histone octamer containing two molecules each of H2A, H2B, H3 and H4 assembled in one H3-H4 heterotetramer and two H2A-H2B heterodimers. The octamer wraps approximately 147 bp of DNA.

The protein resides in the nucleus. It is found in the chromosome. Core component of nucleosome. Nucleosomes wrap and compact DNA into chromatin, limiting DNA accessibility to the cellular machineries which require DNA as a template. Histones thereby play a central role in transcription regulation, DNA repair, DNA replication and chromosomal stability. DNA accessibility is regulated via a complex set of post-translational modifications of histones, also called histone code, and nucleosome remodeling. In Eucalyptus globulus (Tasmanian blue gum), this protein is Histone H4.